A 196-amino-acid chain; its full sequence is Serine/arginine-rich splicing factor RSZ22A (196 aa).

The 70-residue stretch at 2–71 (SRVYVGNLDP…NGWRVEQSHN (70 aa)) folds into the RRM domain. At serine 48 the chain carries Phosphoserine. The span at 58–70 (VDGKNGWRVEQSH) shows a compositional bias: basic and acidic residues. Positions 58–196 (VDGKNGWRVE…GLKDVRRSRS (139 aa)) are disordered. Over residues 72–87 (RGGGGGRGGGRGGGDG) the composition is skewed to gly residues. The segment covering 88-100 (GRGRGGSDLKCYE) has biased composition (basic and acidic residues). A CCHC-type zinc finger spans residues 96 to 113 (LKCYECGESGHFARECRS). Residues 119–135 (GRRRSRSRSRSPPRYRK) are compositionally biased toward basic residues. 7 positions are modified to phosphoserine: serine 136, serine 144, serine 146, serine 151, serine 159, serine 170, and serine 196. Residues 139-149 (YGGRRSYSPRA) show a composition bias toward low complexity.

This sequence belongs to the splicing factor SR family. RSZ subfamily. Component of the spliceosome. In terms of processing, extensively phosphorylated on serine residues in the RS domain.

It is found in the nucleus. Its function is as follows. Probably involved in intron recognition and spliceosome assembly. This is Serine/arginine-rich splicing factor RSZ22A (RSZ22A) from Arabidopsis thaliana (Mouse-ear cress).